Here is a 71-residue protein sequence, read N- to C-terminus: Small ribosomal subunit protein bS21 (71 aa).

The tract at residues 38 to 71 (YEKPTTVRKRAKAAAQKRHAKKLSRENARRVRLY) is disordered. Over residues 43-59 (TVRKRAKAAAQKRHAKK) the composition is skewed to basic residues. The span at 60 to 71 (LSRENARRVRLY) shows a compositional bias: basic and acidic residues.

Belongs to the bacterial ribosomal protein bS21 family.

The sequence is that of Small ribosomal subunit protein bS21 from Aliivibrio fischeri (strain ATCC 700601 / ES114) (Vibrio fischeri).